Reading from the N-terminus, the 667-residue chain is Bifunctional polymyxin resistance protein ArnA (667 aa).

Residues 1-304 (MKAIVFAYHD…EMGIVTDVRL (304 aa)) are formyltransferase ArnAFT. Histidine 104 acts as the Proton donor; for formyltransferase activity in catalysis. Residues arginine 114 and 136–140 (VKKAD) contribute to the (6R)-10-formyltetrahydrofolate site. The segment at 314–667 (RRTRVLILGV…TAAPKDELNA (354 aa)) is dehydrogenase ArnADH. NAD(+) is bound by residues aspartate 347 and 368-369 (DI). UDP-alpha-D-glucuronate-binding positions include alanine 393, tyrosine 398, and 432–433 (TS). The Proton acceptor; for decarboxylase activity role is filled by glutamate 434. UDP-alpha-D-glucuronate contacts are provided by residues arginine 460, asparagine 492, 526–535 (KLVDGGAQKR), and tyrosine 613. Arginine 619 functions as the Proton donor; for decarboxylase activity in the catalytic mechanism.

This sequence in the N-terminal section; belongs to the Fmt family. UDP-L-Ara4N formyltransferase subfamily. In the C-terminal section; belongs to the NAD(P)-dependent epimerase/dehydratase family. UDP-glucuronic acid decarboxylase subfamily. As to quaternary structure, homohexamer, formed by a dimer of trimers.

It carries out the reaction UDP-alpha-D-glucuronate + NAD(+) = UDP-beta-L-threo-pentopyranos-4-ulose + CO2 + NADH. The enzyme catalyses UDP-4-amino-4-deoxy-beta-L-arabinose + (6R)-10-formyltetrahydrofolate = UDP-4-deoxy-4-formamido-beta-L-arabinose + (6S)-5,6,7,8-tetrahydrofolate + H(+). The protein operates within nucleotide-sugar biosynthesis; UDP-4-deoxy-4-formamido-beta-L-arabinose biosynthesis; UDP-4-deoxy-4-formamido-beta-L-arabinose from UDP-alpha-D-glucuronate: step 1/3. It functions in the pathway nucleotide-sugar biosynthesis; UDP-4-deoxy-4-formamido-beta-L-arabinose biosynthesis; UDP-4-deoxy-4-formamido-beta-L-arabinose from UDP-alpha-D-glucuronate: step 3/3. It participates in bacterial outer membrane biogenesis; lipopolysaccharide biosynthesis. Functionally, bifunctional enzyme that catalyzes the oxidative decarboxylation of UDP-glucuronic acid (UDP-GlcUA) to UDP-4-keto-arabinose (UDP-Ara4O) and the addition of a formyl group to UDP-4-amino-4-deoxy-L-arabinose (UDP-L-Ara4N) to form UDP-L-4-formamido-arabinose (UDP-L-Ara4FN). The modified arabinose is attached to lipid A and is required for resistance to polymyxin and cationic antimicrobial peptides. The protein is Bifunctional polymyxin resistance protein ArnA of Yersinia pseudotuberculosis serotype O:3 (strain YPIII).